The chain runs to 1328 residues: DNA-directed RNA polymerase subunit beta (1328 aa).

It belongs to the RNA polymerase beta chain family. The RNAP catalytic core consists of 2 alpha, 1 beta, 1 beta' and 1 omega subunit. When a sigma factor is associated with the core the holoenzyme is formed, which can initiate transcription.

It carries out the reaction RNA(n) + a ribonucleoside 5'-triphosphate = RNA(n+1) + diphosphate. DNA-dependent RNA polymerase catalyzes the transcription of DNA into RNA using the four ribonucleoside triphosphates as substrates. The protein is DNA-directed RNA polymerase subunit beta of Karelsulcia muelleri (strain GWSS) (Sulcia muelleri).